We begin with the raw amino-acid sequence, 499 residues long: Phenylalanine--tRNA ligase alpha subunit B (499 aa).

L-phenylalanine is bound by residues Thr-330, 373–375 (QIE), and Tyr-413. Glu-415 provides a ligand contact to Mg(2+). Phe-439 serves as a coordination point for L-phenylalanine.

The protein belongs to the class-II aminoacyl-tRNA synthetase family. Phe-tRNA synthetase alpha subunit type 2 subfamily. Heterotetramer; dimer of two heterodimers formed by alpha and beta subunits. Mg(2+) is required as a cofactor.

The protein resides in the cytoplasm. It catalyses the reaction tRNA(Phe) + L-phenylalanine + ATP = L-phenylalanyl-tRNA(Phe) + AMP + diphosphate + H(+). This Xenopus laevis (African clawed frog) protein is Phenylalanine--tRNA ligase alpha subunit B (farsa-b).